The primary structure comprises 154 residues: Small ribosomal subunit protein uS13 (154 aa).

This sequence belongs to the universal ribosomal protein uS13 family.

It localises to the cytoplasm. In terms of biological role, located at the top of the head of the 40S subunit, it contacts several helices of the 18S rRNA. In Dictyostelium discoideum (Social amoeba), this protein is Small ribosomal subunit protein uS13 (rps18).